Here is a 125-residue protein sequence, read N- to C-terminus: E4-ORF1 (125 aa).

The PDZ-binding motif lies at 122–125 (ATLV).

Belongs to the dUTPase family. Binds to human MPDZ.

Its subcellular location is the host cytoplasm. It carries out the reaction dUTP + H2O = dUMP + diphosphate + H(+). Functionally, plays a key role in virus oncogenecity in animals. Binds and sequesters human MUPP1/MPDZ protein in the cytoplasm, preventing it from playing a role in cellular proliferation regulation. Induces cell transformation, probably by inactivating MPDZ protein. In Homo sapiens (Human), this protein is E4-ORF1 (E4).